The chain runs to 340 residues: Alpha-1,4-N-acetylglucosaminyltransferase (340 aa).

The Cytoplasmic portion of the chain corresponds to 1-4 (MRKE). Residues 5–25 (LQLSLSVTLLLVCGFLYQFTL) traverse the membrane as a helical; Signal-anchor for type II membrane protein segment. The Lumenal segment spans residues 26–340 (KSSCLFCLPS…VTGELGPGNK (315 aa)). N-linked (GlcNAc...) asparagine glycosylation is found at asparagine 99 and asparagine 138. The short motif at 167 to 169 (DTD) is the DXD motif element. Asparagine 251 and asparagine 282 each carry an N-linked (GlcNAc...) asparagine glycan.

This sequence belongs to the glycosyltransferase 32 family. Detected in stomach and pancreas.

The protein localises to the golgi apparatus membrane. It participates in protein modification; protein glycosylation. Its function is as follows. Catalyzes the transfer of N-acetylglucosamine (GlcNAc) to core 2 branched O-glycans. Necessary for the synthesis of type III mucin which is specifically produced in the stomach, duodenum, and pancreatic duct. May protect against inflammation-associated gastric adenocarcinomas. This is Alpha-1,4-N-acetylglucosaminyltransferase (A4GNT) from Homo sapiens (Human).